We begin with the raw amino-acid sequence, 116 residues long: UPF0102 protein Neut_1662 (116 aa).

Belongs to the UPF0102 family.

This chain is UPF0102 protein Neut_1662, found in Nitrosomonas eutropha (strain DSM 101675 / C91 / Nm57).